Reading from the N-terminus, the 1125-residue chain is RGS domain-containing serine/threonine-protein kinase A (1125 aa).

Disordered stretches follow at residues 1–77 (MKTS…GGNK), 96–191 (RRNS…IVDD), 276–416 (GISP…NNTN), and 455–480 (YVGG…PAPE). Composition is skewed to low complexity over residues 7 to 30 (SSNS…NNNN) and 37 to 66 (SSKS…LSSG). Over residues 121 to 136 (LDSKPPKPFDEKDDPI) the composition is skewed to basic and acidic residues. Low complexity-rich tracts occupy residues 159–191 (QPQQ…IVDD) and 281–342 (NNNN…LNNS). Residues 343–361 (PRYLNSSSSPRSMQHLSSK) are compositionally biased toward polar residues. Over residues 362-416 (ITTTTTTTTTTTTTTSDDNNGNTNNNISNNNNIINNSNNNSNSNNNNNNNINNTN) the composition is skewed to low complexity. Residues 487 to 603 (KFIETITDPT…ISSPFNPEWK (117 aa)) form the RGS domain. The span at 617–685 (TTTQPINNFN…NNSNGSNTSS (69 aa)) shows a compositional bias: low complexity. Disordered stretches follow at residues 617 to 710 (TTTQ…KERS) and 723 to 762 (NLSN…SNNN). Residues 690 to 710 (ERLDNIKGNRERVDSNGKERS) are compositionally biased toward basic and acidic residues. The span at 723–735 (NLSNHSNSSSNSN) shows a compositional bias: low complexity. Over residues 736-748 (GKDKDKDKDKNEN) the composition is skewed to basic and acidic residues. Over residues 749–762 (TTDNSNNNNNSNNN) the composition is skewed to low complexity. Residues 842–1097 (VSIHKWIASG…YLESIIYPSV (256 aa)) enclose the Protein kinase domain. Residues 848 to 856 (IASGSSGRV) and Lys-869 each bind ATP. The active-site Proton acceptor is Asp-963.

It belongs to the protein kinase superfamily. TKL Ser/Thr protein kinase family. Autophosphorylated.

It localises to the cytoplasm. The protein localises to the cell membrane. It catalyses the reaction L-seryl-[protein] + ATP = O-phospho-L-seryl-[protein] + ADP + H(+). The catalysed reaction is L-threonyl-[protein] + ATP = O-phospho-L-threonyl-[protein] + ADP + H(+). With respect to regulation, up-regulated by cAMP. Serine/threonine kinase involved in negative regulation of chemotaxis. This is RGS domain-containing serine/threonine-protein kinase A (rckA) from Dictyostelium discoideum (Social amoeba).